Consider the following 466-residue polypeptide: ATFFLLSWTHCWSLPLPYGDDDDDDLSEEDLEFAEHYLKSYYHPVTLAGILKKSTVTSTVDRLREMQSFFGLDVTGKLDDPTLDIMRKPRCGVPDVGVYNVFPRTLKWSQTNLTYRIVNYTPDISHSEVEKAFRKAFKVWSDVTPLNFTRIHDGTADIMISFGTKEHGDFYPFDGPSGLLAHAFPPGPNLGGDAHFDDDETWTSSSKGYNLFIVAAHELGHSLGLDHSKDPGALMFPIYTYTGKSHFMLPDDDVQGIQSLYGPGDEDPNPKHPKTPEKCDPALSLDAITSLRGETMIFKDRFFWRLHPQQVEPELFLTKSFWPELPNHVDAAYEHPSRDLMFIFRGRKFWALNGYDIMEGYPRKISDLGFPKEVKRLSAAVHFEDTGKTLFFSGNHVWSYDDANQTMDKDYPRLIEEEFPGIGDKVDAVYEKNGYIYFFNGPIQFEYSIWSNRIVRVMPTNSLLWC.

Positions 1-13 are cleaved as a signal peptide; that stretch reads ATFFLLSWTHCWS. Positions 14-98 are cleaved as a propeptide — activation peptide; the sequence is LPLPYGDDDD…PRCGVPDVGV (85 aa). The short motif at 89–96 is the Cysteine switch element; that stretch reads PRCGVPDV. Cys-91 lines the Zn(2+) pocket. An N-linked (GlcNAc...) asparagine glycan is attached at Asn-112. Asp-123 lines the Ca(2+) pocket. Asn-147 carries N-linked (GlcNAc...) asparagine glycosylation. A Ca(2+)-binding site is contributed by Asp-157. Zn(2+)-binding residues include His-167 and Asp-169. Residues 171 to 241 form an interaction with TIMP2 region; the sequence is YPFDGPSGLL…GALMFPIYTY (71 aa). Residues Asp-174, Gly-175, Ser-177, and Leu-179 each contribute to the Ca(2+) site. His-182 is a binding site for Zn(2+). Residues Asn-189, Gly-191, and Asp-193 each coordinate Ca(2+). His-195 lines the Zn(2+) pocket. Residues Asp-197, Asp-198, and Glu-200 each coordinate Ca(2+). Position 217 (His-217) interacts with Zn(2+). The active site involves Glu-218. 3 residues coordinate Zn(2+): His-221, His-227, and Met-235. Residues 258 to 279 form a disordered region; that stretch reads QSLYGPGDEDPNPKHPKTPEKC. An interaction with collagen region spans residues 263–466; that stretch reads PGDEDPNPKH…VMPTNSLLWC (204 aa). Basic and acidic residues predominate over residues 268–279; the sequence is PNPKHPKTPEKC. Hemopexin repeat units lie at residues 276–325, 326–372, 374–422, and 423–466; these read PEKC…WPEL, PNHV…GFPK, VKRL…FPGI, and GDKV…LLWC. The cysteines at positions 279 and 466 are disulfide-linked. The Ca(2+) site is built by Asp-286, Ile-288, Asp-330, and Ala-332. Residue Tyr-361 is modified to Phosphotyrosine; by PKDCC. Ca(2+)-binding residues include Ser-378 and Ala-380. Residue Asn-404 is glycosylated (N-linked (GlcNAc...) asparagine). The Ca(2+) site is built by Asp-427 and Val-429.

The protein belongs to the peptidase M10A family. It depends on Ca(2+) as a cofactor. Zn(2+) is required as a cofactor. In terms of processing, the proenzyme is activated by removal of the propeptide; this cleavage can be effected by other matrix metalloproteinases, such as MMP2, MMP3 and MMP14 and may involve several cleavage steps. Cleavage can also be autocatalytic, after partial maturation by another protease or after treatment with 4-aminophenylmercuric acetate (APMA) (in vitro). Post-translationally, N-glycosylated. Tyrosine phosphorylated by PKDCC/VLK.

It localises to the secreted. Its subcellular location is the extracellular space. The protein resides in the extracellular matrix. Plays a role in the degradation of extracellular matrix proteins including fibrillar collagen, fibronectin, TNC and ACAN. Cleaves triple helical collagens, including type I, type II and type III collagen, but has the highest activity with soluble type II collagen. Can also degrade collagen type IV, type XIV and type X. May also function by activating or degrading key regulatory proteins, such as TGFB1 and CCN2. Plays a role in wound healing, tissue remodeling, cartilage degradation, bone development, bone mineralization and ossification. Required for normal embryonic bone development and ossification. Plays a role in the healing of bone fractures via endochondral ossification. Plays a role in wound healing, probably by a mechanism that involves proteolytic activation of TGFB1 and degradation of CCN2. Plays a role in keratinocyte migration during wound healing. May play a role in cell migration and in tumor cell invasion. In Rattus norvegicus (Rat), this protein is Collagenase 3 (Mmp13).